Here is a 1648-residue protein sequence, read N- to C-terminus: AT-rich interactive domain-containing protein arid-1 (1648 aa).

Disordered regions lie at residues 150-270 (ISEA…PVIN) and 284-307 (RKLE…EEKL). 3 stretches are compositionally biased toward acidic residues: residues 166–193 (DDDE…DTEE), 219–228 (TQSEESSADS), and 251–260 (SDEEDQEDLA). A compositionally biased stretch (polar residues) spans 261 to 270 (TTDSENPVIN). The 91-residue stretch at 655-745 (AETKDLFVAM…FLESYLAINT (91 aa)) folds into the ARID domain. Disordered regions lie at residues 763–935 (VLPG…KEDT), 1095–1563 (SEKR…KPHD), and 1628–1648 (KTAS…TPRP). Positions 848–860 (SDDVTDVPDDMTD) are enriched in acidic residues. Basic and acidic residues-rich tracts occupy residues 861–878 (HEDL…ERKS) and 925–935 (SEGRGPRKEDT). 2 stretches are compositionally biased toward acidic residues: residues 1102–1112 (DDDESSDSDTD) and 1145–1154 (GDEEAEEEVK). Low complexity predominate over residues 1165–1185 (QESPPTTSQGTTTPETAATGG). A compositionally biased stretch (pro residues) spans 1195 to 1208 (YPPVPEELVPPPPV). Polar residues predominate over residues 1213–1251 (FPSTDRFSSGGSSNYPTLSRQGSINSMASPMFSPNSDLS). Residues 1313-1326 (RASERSIDSASEHH) are compositionally biased toward basic and acidic residues. Positions 1348-1357 (ISTTQPTDTS) are enriched in polar residues. Residues 1377 to 1392 (ASPTLLTSGPLTLSSS) are compositionally biased toward low complexity. Over residues 1393 to 1404 (APPPPPASPAPP) the composition is skewed to pro residues. Composition is skewed to low complexity over residues 1474-1486 (STTT…PKSI) and 1531-1541 (TPTTMTTSTPT). Positions 1542-1551 (RADSFQTQKN) are enriched in polar residues.

The protein localises to the nucleus. Functionally, DNA-binding protein which modulates activity of several transcription factors. Plays a role in the modulation of endoplasmic reticulum (ER) homeostasis during chemical and pathogen stress, including exposure to the Gram-negative bacterium P.aeruginosa. The polypeptide is AT-rich interactive domain-containing protein arid-1 (Caenorhabditis elegans).